The sequence spans 177 residues: Large ribosomal subunit protein uL6 (177 aa).

The protein belongs to the universal ribosomal protein uL6 family. In terms of assembly, part of the 50S ribosomal subunit.

Functionally, this protein binds to the 23S rRNA, and is important in its secondary structure. It is located near the subunit interface in the base of the L7/L12 stalk, and near the tRNA binding site of the peptidyltransferase center. The chain is Large ribosomal subunit protein uL6 from Agrobacterium fabrum (strain C58 / ATCC 33970) (Agrobacterium tumefaciens (strain C58)).